The following is a 152-amino-acid chain: Cell division protein SepF (152 aa).

Positions 25–54 (EEREPVQEEKGTKDKAAFQERPQTGKQNVV) are disordered. Basic and acidic residues predominate over residues 28 to 42 (EPVQEEKGTKDKAAF).

It belongs to the SepF family. As to quaternary structure, homodimer. Interacts with FtsZ.

It is found in the cytoplasm. Cell division protein that is part of the divisome complex and is recruited early to the Z-ring. Probably stimulates Z-ring formation, perhaps through the cross-linking of FtsZ protofilaments. Its function overlaps with FtsA. This Bacillus pumilus (strain SAFR-032) protein is Cell division protein SepF.